The sequence spans 143 residues: Small ribosomal subunit protein eS12 (143 aa).

Glycyl lysine isopeptide (Lys-Gly) (interchain with G-Cter in ubiquitin) cross-links involve residues lysine 85, lysine 95, and lysine 114.

Belongs to the eukaryotic ribosomal protein eS12 family. As to quaternary structure, component of the small ribosomal subunit (SSU). Mature yeast ribosomes consist of a small (40S) and a large (60S) subunit. The 40S small subunit contains 1 molecule of ribosomal RNA (18S rRNA) and 33 different proteins (encoded by 57 genes). The large 60S subunit contains 3 rRNA molecules (25S, 5.8S and 5S rRNA) and 46 different proteins (encoded by 81 genes).

The protein resides in the cytoplasm. Functionally, component of the ribosome, a large ribonucleoprotein complex responsible for the synthesis of proteins in the cell. The small ribosomal subunit (SSU) binds messenger RNAs (mRNAs) and translates the encoded message by selecting cognate aminoacyl-transfer RNA (tRNA) molecules. The large subunit (LSU) contains the ribosomal catalytic site termed the peptidyl transferase center (PTC), which catalyzes the formation of peptide bonds, thereby polymerizing the amino acids delivered by tRNAs into a polypeptide chain. The nascent polypeptides leave the ribosome through a tunnel in the LSU and interact with protein factors that function in enzymatic processing, targeting, and the membrane insertion of nascent chains at the exit of the ribosomal tunnel. This is Small ribosomal subunit protein eS12 from Saccharomyces cerevisiae (strain ATCC 204508 / S288c) (Baker's yeast).